The following is an 868-amino-acid chain: mRNA-capping enzyme (868 aa).

Residue lysine 282 is the N6-GMP-lysine intermediate of the active site. The mRNA cap 0 methyltransferase domain occupies 594–868; it reads GIYRAQTALI…LFGFICLRKN (275 aa). S-adenosyl-L-methionine-binding positions include lysine 607, glycine 624, aspartate 646, and 710–712; that span reads LFI.

This sequence in the N-terminal section; belongs to the dsDNA virus mRNA guanylyltransferase family. It in the C-terminal section; belongs to the class I-like SAM-binding methyltransferase superfamily. mRNA cap 0 methyltransferase family. As to quaternary structure, part of the viral DNA-directed RNA polymerase that consists of 8 polII-like subunits (RPB1, RPB2, RPB3, RPB5, RPB6, RPB7, RPB9, RPB10), a capping enzyme and a termination factor.

The protein localises to the virion. It catalyses the reaction a 5'-end triphospho-ribonucleoside in mRNA + H2O = a 5'-end diphospho-ribonucleoside in mRNA + phosphate + H(+). The enzyme catalyses a 5'-end diphospho-ribonucleoside in mRNA + GTP + H(+) = a 5'-end (5'-triphosphoguanosine)-ribonucleoside in mRNA + diphosphate. It carries out the reaction a 5'-end (5'-triphosphoguanosine)-ribonucleoside in mRNA + S-adenosyl-L-methionine = a 5'-end (N(7)-methyl 5'-triphosphoguanosine)-ribonucleoside in mRNA + S-adenosyl-L-homocysteine. Its pathway is mRNA processing; mRNA capping. Functionally, probably catalyzes the second reaction in the mRNA cap formation pathway. Forms a covalent complex with GTP. The polypeptide is mRNA-capping enzyme (Ornithodoros (relapsing fever ticks)).